The primary structure comprises 269 residues: Formamidopyrimidine-DNA glycosylase (269 aa).

The Schiff-base intermediate with DNA role is filled by Pro2. Glu3 serves as the catalytic Proton donor. Residue Lys58 is the Proton donor; for beta-elimination activity of the active site. 3 residues coordinate DNA: His91, Arg110, and Lys150. The FPG-type zinc finger occupies 235–269 (SVYGCENKTCHFCKSKIIKIVQNQRSTFYCRKCQT). Arg259 functions as the Proton donor; for delta-elimination activity in the catalytic mechanism.

Belongs to the FPG family. As to quaternary structure, monomer. The cofactor is Zn(2+).

It carries out the reaction Hydrolysis of DNA containing ring-opened 7-methylguanine residues, releasing 2,6-diamino-4-hydroxy-5-(N-methyl)formamidopyrimidine.. It catalyses the reaction 2'-deoxyribonucleotide-(2'-deoxyribose 5'-phosphate)-2'-deoxyribonucleotide-DNA = a 3'-end 2'-deoxyribonucleotide-(2,3-dehydro-2,3-deoxyribose 5'-phosphate)-DNA + a 5'-end 5'-phospho-2'-deoxyribonucleoside-DNA + H(+). Functionally, involved in base excision repair of DNA damaged by oxidation or by mutagenic agents. Acts as a DNA glycosylase that recognizes and removes damaged bases. Has a preference for oxidized purines, such as 7,8-dihydro-8-oxoguanine (8-oxoG). Has AP (apurinic/apyrimidinic) lyase activity and introduces nicks in the DNA strand. Cleaves the DNA backbone by beta-delta elimination to generate a single-strand break at the site of the removed base with both 3'- and 5'-phosphates. This Ruthia magnifica subsp. Calyptogena magnifica protein is Formamidopyrimidine-DNA glycosylase.